Reading from the N-terminus, the 421-residue chain is Serine hydroxymethyltransferase (421 aa).

Residues Leu-121 and 125–127 each bind (6S)-5,6,7,8-tetrahydrofolate; that span reads GHL. Position 229 is an N6-(pyridoxal phosphate)lysine (Lys-229).

The protein belongs to the SHMT family. In terms of assembly, homodimer. Requires pyridoxal 5'-phosphate as cofactor.

It is found in the cytoplasm. It carries out the reaction (6R)-5,10-methylene-5,6,7,8-tetrahydrofolate + glycine + H2O = (6S)-5,6,7,8-tetrahydrofolate + L-serine. The protein operates within one-carbon metabolism; tetrahydrofolate interconversion. It participates in amino-acid biosynthesis; glycine biosynthesis; glycine from L-serine: step 1/1. Catalyzes the reversible interconversion of serine and glycine with tetrahydrofolate (THF) serving as the one-carbon carrier. This reaction serves as the major source of one-carbon groups required for the biosynthesis of purines, thymidylate, methionine, and other important biomolecules. Also exhibits THF-independent aldolase activity toward beta-hydroxyamino acids, producing glycine and aldehydes, via a retro-aldol mechanism. The chain is Serine hydroxymethyltransferase from Haemophilus influenzae (strain PittEE).